We begin with the raw amino-acid sequence, 104 residues long: Protein RnfH (104 aa).

Belongs to the UPF0125 (RnfH) family.

The polypeptide is Protein RnfH (Pseudomonas fluorescens (strain Pf0-1)).